The primary structure comprises 299 residues: GTPase Era (299 aa).

Positions 5-172 constitute an Era-type G domain; sequence KSGFVSIIGR…IDVLKTYLPE (168 aa). A G1 region spans residues 13-20; that stretch reads GRPNVGKS. 13 to 20 serves as a coordination point for GTP; it reads GRPNVGKS. The segment at 39-43 is G2; the sequence is QTTRN. The segment at 60 to 63 is G3; that stretch reads DTPG. GTP contacts are provided by residues 60 to 64 and 122 to 125; these read DTPGI and NKID. Residues 122-125 form a G4 region; sequence NKID. Residues 151–153 are G5; that stretch reads ISA. The KH type-2 domain occupies 203-280; the sequence is TSEEIPHAIG…YLELWVKVQR (78 aa).

Belongs to the TRAFAC class TrmE-Era-EngA-EngB-Septin-like GTPase superfamily. Era GTPase family. As to quaternary structure, monomer.

The protein resides in the cytoplasm. Its subcellular location is the cell membrane. Functionally, an essential GTPase that binds both GDP and GTP, with rapid nucleotide exchange. Plays a role in 16S rRNA processing and 30S ribosomal subunit biogenesis and possibly also in cell cycle regulation and energy metabolism. The sequence is that of GTPase Era from Staphylococcus aureus (strain Mu3 / ATCC 700698).